Reading from the N-terminus, the 173-residue chain is RNA polymerase sigma factor TcsR (173 aa).

The sigma-70 factor domain-4 stretch occupies residues 122–169; the sequence is IKDLTQNEKNIIRKIYLDRLRESEISRELNISRQAVNKTHLRALEKLK. Positions 143-162 form a DNA-binding region, H-T-H motif; sequence ESEISRELNISRQAVNKTHL.

Belongs to the sigma-70 factor family.

Functionally, sigma factors are initiation factors that promote the attachment of RNA polymerase to specific initiation sites and are then released. Transcriptional regulator specifically required to activate expression of the toxin gene locus, composed of tcsL, tcsH and tcdE/utxA. The protein is RNA polymerase sigma factor TcsR of Paraclostridium sordellii (Clostridium sordellii).